The sequence spans 448 residues: Vimentin (448 aa).

The interval proline 1–glutamate 77 is head. Residue serine 9 is modified to Phosphoserine. Threonine 16 is a glycosylation site (O-linked (GlcNAc) threonine). Phosphoserine; by PKC; alternate is present on serine 17. The O-linked (GlcNAc) serine; alternate glycan is linked to serine 17. Serine 22 is subject to Phosphoserine; by CaMK2, PKA, PKC and ROCK2. Phosphoserine occurs at positions 29, 31, and 33. The residue at position 35 (tyrosine 35) is a Phosphotyrosine. A Phosphoserine modification is found at serine 37. Residue serine 38 is modified to Phosphoserine; by CDK5 and CDK1. A Phosphotyrosine modification is found at tyrosine 43. Serine 48 bears the Phosphoserine; by PKA and PKC mark. Serine 54 is subject to Phosphoserine; by AURKB and ROCK2. Serine 55 carries the phosphoserine modification. Serine 65 carries the post-translational modification Phosphoserine; by CaMK2. Serine 69 is modified (phosphoserine). The segment at phenylalanine 78 to leucine 113 is coil 1A. Positions phenylalanine 78–leucine 113 form a coiled coil. An IF rod domain is found at glutamate 85–isoleucine 393. Lysine 86 is covalently cross-linked (Glycyl lysine isopeptide (Lys-Gly) (interchain with G-Cter in SUMO2)). Tyrosine 99 is subject to Phosphotyrosine. N6-acetyllysine; alternate occurs at positions 102, 111, and 121. N6-succinyllysine; alternate occurs at positions 102 and 111. Glycyl lysine isopeptide (Lys-Gly) (interchain with G-Cter in SUMO2); alternate cross-links involve residues lysine 102, lysine 111, and lysine 121. The interval leucine 114–glutamate 135 is linker 1. Serine 126 is modified (phosphoserine). Residues methionine 136–leucine 227 adopt a coiled-coil conformation. The tract at residues methionine 136–leucine 227 is coil 1B. Lysine 150 bears the N6-acetyllysine mark. Lysine 170 is modified (N6-acetyllysine; alternate). Lysine 170 is subject to N6-succinyllysine; alternate. Serine 196 carries the post-translational modification Phosphoserine. Lysine 205 bears the N6-acetyllysine; alternate mark. Lysine 205 is covalently cross-linked (Glycyl lysine isopeptide (Lys-Gly) (interchain with G-Cter in SUMO2); alternate). Serine 208 is modified (phosphoserine). Position 217 is an N6-acetyllysine (lysine 217). The linker 12 stretch occupies residues glutamine 228–alanine 250. Lysine 244 participates in a covalent cross-link: Glycyl lysine isopeptide (Lys-Gly) (interchain with G-Cter in SUMO2). Residues leucine 251 to glutamate 389 are coil 2. The residue at position 276 (lysine 276) is an N6-acetyllysine; alternate. Residue lysine 276 is modified to N6-succinyllysine; alternate. Lysine 276 participates in a covalent cross-link: Glycyl lysine isopeptide (Lys-Gly) (interchain with G-Cter in SUMO2); alternate. Serine 281 bears the Phosphoserine mark. A coiled-coil region spans residues asparagine 285 to glutamate 389. Residue lysine 295 forms a Glycyl lysine isopeptide (Lys-Gly) (interchain with G-Cter in SUMO2) linkage. Residue serine 307 is modified to Phosphoserine. Residues leucine 308–glutamate 311 carry the [IL]-x-C-x-x-[DE] motif motif. Residue lysine 355 is modified to N6-acetyllysine; alternate. Lysine 355 participates in a covalent cross-link: Glycyl lysine isopeptide (Lys-Gly) (interchain with G-Cter in SUMO2); alternate. Residues glutamate 390 to glutamate 448 form a tail region. Serine 391, serine 394, serine 401, and serine 402 each carry phosphoserine. Threonine 408 carries the phosphothreonine modification. A Phosphoserine modification is found at serine 412. Threonine 418 carries the post-translational modification Phosphothreonine. A Phosphoserine modification is found at serine 420. Residue lysine 421 forms a Glycyl lysine isopeptide (Lys-Gly) (interchain with G-Cter in SUMO2) linkage. At lysine 427 the chain carries N6-acetyllysine; alternate. Lysine 427 bears the N6-succinyllysine; alternate mark. Lysine 427 is covalently cross-linked (Glycyl lysine isopeptide (Lys-Gly) (interchain with G-Cter in SUMO2); alternate). A Glycyl lysine isopeptide (Lys-Gly) (interchain with G-Cter in SUMO1); alternate cross-link involves residue lysine 427. Phosphothreonine is present on residues threonine 428 and threonine 440. Serine 441 bears the Phosphoserine mark.

Belongs to the intermediate filament family. As to quaternary structure, homomer assembled from elementary dimers. Identified in complexes that contain VIM, EZR, AHNAK, BFSP1, BFSP2, ANK2, PLEC, PRX and spectrin. Interacts with BCAS3. Interacts with LGSN. Interacts with SYNM. Interacts (via rod region) with PLEC (via CH 1 domain). Interacts with STK33. Interacts with LARP6. Interacts with RAB8B. Interacts with TOR1A; the interaction associates TOR1A with the cytoskeleton. Interacts with TOR1AIP1. Interacts with TOR1AIP1. Interacts with DIAPH1. Interacts with EPPK1; interaction is dependent of higher-order structure of intermediate filament. Interacts with the non-receptor tyrosine kinase SRMS; the interaction leads to phosphorylation of VIM. Interacts with NOD2. Interacts (via head region) with CORO1C. Interacts with HDGF. Interacts with PRKCE (via phorbol-ester/DAG-type 2 domain). Interacts with BFSP2. Interacts with PPL. Interacts with PKP1 and PKP2. Interacts with SCRIB (via PDZ domains); the interaction protects SCRIB from proteasomal degradation and facilitates SCRIB localization to intermediate filaments, the interaction is reduced by cell contact inhibition. In terms of processing, one of the most prominent phosphoproteins in various cells of mesenchymal origin. Phosphorylation is enhanced during cell division, at which time vimentin filaments are significantly reorganized. Phosphorylation by PKN1 inhibits the formation of filaments. Filament disassembly during mitosis is promoted by phosphorylation at Ser-37 as well as by nestin. Phosphorylated at Ser-38 by CDK5 during neutrophil secretion in the cytoplasm. Phosphorylated by STK33. Phosphorylated on tyrosine residues by SRMS. S-nitrosylation is induced by interferon-gamma and oxidatively-modified low-densitity lipoprotein (LDL(ox)) possibly implicating the iNOS-S100A8/9 transnitrosylase complex.

The protein resides in the cytoplasm. It localises to the cytoskeleton. It is found in the nucleus matrix. Its subcellular location is the cell membrane. In terms of biological role, vimentins are class-III intermediate filaments found in various non-epithelial cells, especially mesenchymal cells. Vimentin is attached to the nucleus, endoplasmic reticulum, and mitochondria, either laterally or terminally. Plays a role in cell directional movement, orientation, cell sheet organization and Golgi complex polarization at the cell migration front. Protects SCRIB from proteasomal degradation and facilitates its localization to intermediate filaments in a cell contact-mediated manner. Its function is as follows. Involved with LARP6 in the stabilization of type I collagen mRNAs for CO1A1 and CO1A2. In Cricetulus griseus (Chinese hamster), this protein is Vimentin (VIM).